A 447-amino-acid polypeptide reads, in one-letter code: N-succinylarginine dihydrolase (447 aa).

Residues Ala-19 to Ser-28, Asn-110, and His-137 to Arg-138 each bind substrate. Glu-174 is an active-site residue. Substrate is bound at residue Arg-213. The active site involves His-249. Positions 251 and 364 each coordinate substrate. Cys-370 (nucleophile) is an active-site residue.

It belongs to the succinylarginine dihydrolase family. Homodimer.

The enzyme catalyses N(2)-succinyl-L-arginine + 2 H2O + 2 H(+) = N(2)-succinyl-L-ornithine + 2 NH4(+) + CO2. It participates in amino-acid degradation; L-arginine degradation via AST pathway; L-glutamate and succinate from L-arginine: step 2/5. Catalyzes the hydrolysis of N(2)-succinylarginine into N(2)-succinylornithine, ammonia and CO(2). The sequence is that of N-succinylarginine dihydrolase from Yersinia pestis bv. Antiqua (strain Antiqua).